A 195-amino-acid chain; its full sequence is NADH-quinone oxidoreductase subunit B (195 aa).

Cysteine 74, cysteine 75, cysteine 139, and cysteine 169 together coordinate [4Fe-4S] cluster.

This sequence belongs to the complex I 20 kDa subunit family. NDH-1 is composed of 14 different subunits. Subunits NuoB, C, D, E, F, and G constitute the peripheral sector of the complex. [4Fe-4S] cluster serves as cofactor.

Its subcellular location is the cell inner membrane. It catalyses the reaction a quinone + NADH + 5 H(+)(in) = a quinol + NAD(+) + 4 H(+)(out). In terms of biological role, NDH-1 shuttles electrons from NADH, via FMN and iron-sulfur (Fe-S) centers, to quinones in the respiratory chain. The immediate electron acceptor for the enzyme in this species is believed to be ubiquinone. Couples the redox reaction to proton translocation (for every two electrons transferred, four hydrogen ions are translocated across the cytoplasmic membrane), and thus conserves the redox energy in a proton gradient. This Methylobacterium radiotolerans (strain ATCC 27329 / DSM 1819 / JCM 2831 / NBRC 15690 / NCIMB 10815 / 0-1) protein is NADH-quinone oxidoreductase subunit B.